A 92-amino-acid chain; its full sequence is Small ribosomal subunit protein uS19 (92 aa).

It belongs to the universal ribosomal protein uS19 family.

In terms of biological role, protein S19 forms a complex with S13 that binds strongly to the 16S ribosomal RNA. In Roseobacter denitrificans (strain ATCC 33942 / OCh 114) (Erythrobacter sp. (strain OCh 114)), this protein is Small ribosomal subunit protein uS19.